A 373-amino-acid polypeptide reads, in one-letter code: RNA 3'-terminal phosphate cyclase-like protein (373 aa).

This sequence belongs to the RNA 3'-terminal cyclase family. Type 2 subfamily. As to quaternary structure, part of the small subunit (SSU) processome, composed of more than 70 proteins and the RNA chaperone small nucleolar RNA (snoRNA) U3. Interacts with BMS1.

It localises to the nucleus. It is found in the nucleolus. Its function is as follows. As part of the small subunit (SSU) processome, it plays a role in 40S-ribosomal-subunit biogenesis in the early pre-rRNA processing steps at sites A0, A1 and A2 that are required for proper maturation of the 18S RNA. Activates BMS1 by promoting GDP/GTP exchange. Does not have cyclase activity. The sequence is that of RNA 3'-terminal phosphate cyclase-like protein (Rcl1) from Mus musculus (Mouse).